A 265-amino-acid polypeptide reads, in one-letter code: 4-hydroxy-tetrahydrodipicolinate reductase (265 aa).

NAD(+) is bound at residue 9-14 (GPRGRM). R37 is a binding site for NADP(+). NAD(+)-binding positions include 98-100 (GTT) and 124-127 (APNF). The Proton donor/acceptor role is filled by H154. H155 provides a ligand contact to (S)-2,3,4,5-tetrahydrodipicolinate. K158 (proton donor) is an active-site residue. 164-165 (GT) is a (S)-2,3,4,5-tetrahydrodipicolinate binding site.

This sequence belongs to the DapB family.

Its subcellular location is the cytoplasm. It catalyses the reaction (S)-2,3,4,5-tetrahydrodipicolinate + NAD(+) + H2O = (2S,4S)-4-hydroxy-2,3,4,5-tetrahydrodipicolinate + NADH + H(+). The catalysed reaction is (S)-2,3,4,5-tetrahydrodipicolinate + NADP(+) + H2O = (2S,4S)-4-hydroxy-2,3,4,5-tetrahydrodipicolinate + NADPH + H(+). The protein operates within amino-acid biosynthesis; L-lysine biosynthesis via DAP pathway; (S)-tetrahydrodipicolinate from L-aspartate: step 4/4. Its function is as follows. Catalyzes the conversion of 4-hydroxy-tetrahydrodipicolinate (HTPA) to tetrahydrodipicolinate. This Geobacillus thermodenitrificans (strain NG80-2) protein is 4-hydroxy-tetrahydrodipicolinate reductase.